We begin with the raw amino-acid sequence, 474 residues long: Cysteine--tRNA ligase (474 aa).

Cysteine 34 lines the Zn(2+) pocket. Residues 36–46 carry the 'HIGH' region motif; the sequence is PTVYDYAHIGN. Zn(2+) is bound by residues cysteine 219, histidine 244, and glutamate 248. The 'KMSKS' region signature appears at 276–280; sequence KMSKS. Lysine 279 serves as a coordination point for ATP.

It belongs to the class-I aminoacyl-tRNA synthetase family. As to quaternary structure, monomer. Requires Zn(2+) as cofactor.

The protein resides in the cytoplasm. It catalyses the reaction tRNA(Cys) + L-cysteine + ATP = L-cysteinyl-tRNA(Cys) + AMP + diphosphate. This is Cysteine--tRNA ligase (cysS) from Chlamydia pneumoniae (Chlamydophila pneumoniae).